Reading from the N-terminus, the 200-residue chain is Probable GTP-binding protein EngB (200 aa).

The region spanning 26 to 200 (SIPEVALAGR…IYEIAQCIKK (175 aa)) is the EngB-type G domain. GTP is bound by residues 34–41 (GRSNVGKS), 61–65 (GCTRQ), 80–83 (DLPG), 147–150 (TKID), and 179–181 (VSS). Mg(2+)-binding residues include Ser41 and Thr63.

This sequence belongs to the TRAFAC class TrmE-Era-EngA-EngB-Septin-like GTPase superfamily. EngB GTPase family. It depends on Mg(2+) as a cofactor.

Functionally, necessary for normal cell division and for the maintenance of normal septation. In Ehrlichia ruminantium (strain Welgevonden), this protein is Probable GTP-binding protein EngB.